A 233-amino-acid chain; its full sequence is Lipid A 4'-phosphatase (233 aa).

A topological domain (cytoplasmic) is located at residue methionine 1. Residues 2-22 (LLFWMWWALLAVFRAFPGIDI) traverse the membrane as a helical segment. The Extracellular segment spans residues 23–60 (YFSQLFFVGADCDATAAAGNICGGFPYRDVAAFDLLRT). Residues 61–81 (VFFRLPYVVAIVMVWKLVECY) traverse the membrane as a helical segment. The Cytoplasmic segment spans residues 82-94 (QQHGATFNAERAQ). A helical membrane pass occupies residues 95 to 115 (KLKVALGTLLIGPVLLVNVVL). The Extracellular portion of the chain corresponds to 116–149 (KEHWGRPRPIQTDIFGGALHFAEAGSLAGKCVSN). Residues 150–170 (CSFVSGEAASAGWLFCLLLFV) form a helical membrane-spanning segment. Residues 171 to 176 (PKSLRY) lie on the Cytoplasmic side of the membrane. A helical transmembrane segment spans residues 177–197 (AVAAPLAAISILTPAMRLSFG). Over 198–200 (AHY) the chain is Extracellular. A helical transmembrane segment spans residues 201-221 (LSDVVLGWLSSLVVFAALLAL). At 222 to 233 (TESQQHQKNSEI) the chain is on the cytoplasmic side.

It belongs to the lipid A LpxF 4'-phosphatase family.

The protein resides in the cell inner membrane. It functions in the pathway bacterial outer membrane biogenesis; LPS lipid A biosynthesis. Its function is as follows. Removes the 4'-phosphate moiety from lipid IV(A) (a tetraacylated precursor of lipid A). The protein is Lipid A 4'-phosphatase of Rhizobium leguminosarum.